A 507-amino-acid polypeptide reads, in one-letter code: Archaeal-type glutamate synthase [NADPH] (507 aa).

4Fe-4S ferredoxin-type domains are found at residues 10-39 (FVVE…YDEN) and 41-70 (NRVY…VRRN). Positions 19, 22, 25, 29, 50, 53, 56, and 60 each coordinate [4Fe-4S] cluster.

This sequence belongs to the glutamate synthase family. FMN is required as a cofactor.

It catalyses the reaction 2 L-glutamate + NADP(+) = L-glutamine + 2-oxoglutarate + NADPH + H(+). The protein is Archaeal-type glutamate synthase [NADPH] of Thermotoga neapolitana (strain ATCC 49049 / DSM 4359 / NBRC 107923 / NS-E).